The primary structure comprises 234 residues: Urease accessory protein UreF (234 aa).

It belongs to the UreF family. In terms of assembly, ureD, UreF and UreG form a complex that acts as a GTP-hydrolysis-dependent molecular chaperone, activating the urease apoprotein by helping to assemble the nickel containing metallocenter of UreC. The UreE protein probably delivers the nickel.

Its subcellular location is the cytoplasm. Required for maturation of urease via the functional incorporation of the urease nickel metallocenter. In Azoarcus sp. (strain BH72), this protein is Urease accessory protein UreF.